The following is a 242-amino-acid chain: Ubiquinone biosynthesis O-methyltransferase (242 aa).

4 residues coordinate S-adenosyl-L-methionine: Arg44, Gly64, Asp85, and Met129.

It belongs to the methyltransferase superfamily. UbiG/COQ3 family.

The catalysed reaction is a 3-demethylubiquinol + S-adenosyl-L-methionine = a ubiquinol + S-adenosyl-L-homocysteine + H(+). It carries out the reaction a 3-(all-trans-polyprenyl)benzene-1,2-diol + S-adenosyl-L-methionine = a 2-methoxy-6-(all-trans-polyprenyl)phenol + S-adenosyl-L-homocysteine + H(+). The protein operates within cofactor biosynthesis; ubiquinone biosynthesis. O-methyltransferase that catalyzes the 2 O-methylation steps in the ubiquinone biosynthetic pathway. The polypeptide is Ubiquinone biosynthesis O-methyltransferase (Salmonella paratyphi A (strain ATCC 9150 / SARB42)).